We begin with the raw amino-acid sequence, 128 residues long: Small ribosomal subunit protein uS11 (128 aa).

This sequence belongs to the universal ribosomal protein uS11 family. As to quaternary structure, part of the 30S ribosomal subunit. Interacts with proteins S7 and S18. Binds to IF-3.

Its function is as follows. Located on the platform of the 30S subunit, it bridges several disparate RNA helices of the 16S rRNA. Forms part of the Shine-Dalgarno cleft in the 70S ribosome. The sequence is that of Small ribosomal subunit protein uS11 from Porphyromonas gingivalis (strain ATCC BAA-308 / W83).